Here is a 109-residue protein sequence, read N- to C-terminus: Anther-specific protein MZm3-3 (109 aa).

The signal sequence occupies residues 1–41 (MTATTTTAAGGGKVQPRGLPVALSLLLLLVLAAGLGGGAEA). Cystine bridges form between Cys45-Cys86, Cys55-Cys75, Cys76-Cys101, and Cys88-Cys108.

Belongs to the A9/FIL1 family. In terms of tissue distribution, tapetum of anthers.

It is found in the secreted. The sequence is that of Anther-specific protein MZm3-3 from Zea mays (Maize).